A 467-amino-acid chain; its full sequence is Dynactin subunit 4 (467 aa).

The residue at position 2 (alanine 2) is an N-acetylalanine. Residues 152–172 are a coiled coil; sequence QQLAQKEKVERDRKKLARRRN. At serine 203 the chain carries Phosphoserine. Lysine 222 participates in a covalent cross-link: Glycyl lysine isopeptide (Lys-Gly) (interchain with G-Cter in SUMO2). Residue threonine 414 is modified to Phosphothreonine.

Belongs to the dynactin subunit 4 family. In terms of assembly, subunit of dynactin, a multiprotein complex part of a tripartite complex with dynein and a adapter, such as BICDL1, BICD2 or HOOK3. The dynactin complex is built around ACTR1A/ACTB filament and consists of an actin-related filament composed of a shoulder domain, a pointed end and a barbed end. Its length is defined by its flexible shoulder domain. The soulder is composed of 2 DCTN1 subunits, 4 DCTN2 and 2 DCTN3. The 4 DCNT2 (via N-terminus) bind the ACTR1A filament and act as molecular rulers to determine the length. The pointed end is important for binding dynein-dynactin cargo adapters. Consists of 4 subunits: ACTR10, DCNT4, DCTN5 and DCTN6. The barbed end is composed of a CAPZA1:CAPZB heterodimers, which binds ACTR1A/ACTB filament and dynactin and stabilizes dynactin. Interacts with ATP7B, but not ATP7A, in a copper-dependent manner. Interacts with ANK2; this interaction is required for localization at costameres. Interacts with N4BP2L1.

It localises to the cytoplasm. The protein localises to the cytoskeleton. The protein resides in the microtubule organizing center. Its subcellular location is the centrosome. It is found in the stress fiber. It localises to the cell cortex. The protein localises to the myofibril. The protein resides in the sarcomere. Functionally, part of the dynactin complex that activates the molecular motor dynein for ultra-processive transport along microtubules. This Mus musculus (Mouse) protein is Dynactin subunit 4 (Dctn4).